A 1001-amino-acid chain; its full sequence is X-linked retinitis pigmentosa GTPase regulator (1001 aa).

RCC1 repeat units lie at residues 54 to 105 (NKLY…STDT), 106 to 158 (GGVY…LTED), 159 to 208 (GKLF…VTMD), 209 to 261 (GELY…LTEK), 262 to 313 (VVYA…MTEL), and 314 to 367 (GLLY…FATP). A disordered region spans residues 404–428 (SLSARLRRRERERPPCSASMVGTLP). Position 518 is a phosphoserine (serine 518). Composition is skewed to basic and acidic residues over residues 631-641 (KKIRESEENSK) and 659-671 (EDNK…RRSS). Disordered stretches follow at residues 631-738 (KKIR…WYDR), 794-869 (NLEF…EGSE), 902-925 (PKGH…DPTS), and 962-1001 (GDQI…CTIL). 2 stretches are compositionally biased toward acidic residues: residues 679–691 (SETE…DSYM) and 717–731 (EKDE…EVET). Basic and acidic residues-rich tracts occupy residues 794 to 818 (NLEF…EKEA), 847 to 857 (EERKEGEKEIV), and 902 to 911 (PKGHMYDRVK). Residues 976–1001 (QNHMGQNLQDSTTPNMEGKSKSCTIL) are compositionally biased toward polar residues. Residue cysteine 998 is modified to Cysteine methyl ester. Residue cysteine 998 is the site of S-geranylgeranyl cysteine attachment. The propeptide at 999-1001 (TIL) is removed in mature form.

In terms of assembly, interacts with SPATA7. Interacts with PDE6D. Interacts with RPGRIP1 and RPGRIP1L; PDE6D, RPGRIP1 and RPGRIP1L may compete for the same binding sites. Interacts with NPM1. Interacts with PDE6D. Isoform 5 interacts (via N-terminus) with SMC1A and SMC3. Isoform 5 interacts with CEP290. Interacts with WHRN. Interacts with RAB37 and RAB8A (in GDP-bound forms); functions as GEF for RAB37 and RAB8A. Post-translationally, prenylated. In terms of tissue distribution, expressed in the retina (at protein level). Located mainly in the connecting cilia between the outer segment and inner segment and also observed in the outer plexiform layer, inner plexiform layer, and ganglion cell layer of the retinas. Isoform 1: Expressed in the retina (at protein level). Isoform 5: Expressed in the retina (at protein level). Expressed in the brain. Expressed in the testis (at protein level). Expressed in kidney (at protein level).

The protein resides in the golgi apparatus. It localises to the cytoplasm. It is found in the cytoskeleton. The protein localises to the microtubule organizing center. Its subcellular location is the centrosome. The protein resides in the cell projection. It localises to the cilium. It is found in the cilium basal body. The protein localises to the cilium axoneme. Its subcellular location is the flagellum axoneme. In terms of biological role, acts as a guanine-nucleotide releasing factor (GEF) for RAB8A and RAB37 by promoting the conversion of inactive RAB-GDP to the active form RAB-GTP. GEF activity towards RAB8A may facilitate ciliary trafficking by modulating ciliary intracellular localization of RAB8A. GEF activity towards RAB37 maintains autophagic homeostasis and retinal function. Involved in photoreceptor integrity. May control cilia formation by regulating actin stress filaments and cell contractility. May be involved in microtubule organization and regulation of transport in primary cilia. Its function is as follows. Isoform 5 may play a critical role in spermatogenesis and in intraflagellar transport processes. This chain is X-linked retinitis pigmentosa GTPase regulator, found in Mus musculus (Mouse).